A 650-amino-acid chain; its full sequence is DNA gyrase subunit B (650 aa).

Positions 429 to 543 (NELFIVEGDS…AGYVYIAQPP (115 aa)) constitute a Toprim domain. Residues Glu435, Asp508, and Asp510 each coordinate Mg(2+).

The protein belongs to the type II topoisomerase GyrB family. In terms of assembly, heterotetramer, composed of two GyrA and two GyrB chains. In the heterotetramer, GyrA contains the active site tyrosine that forms a transient covalent intermediate with DNA, while GyrB binds cofactors and catalyzes ATP hydrolysis. Mg(2+) is required as a cofactor. It depends on Mn(2+) as a cofactor. Ca(2+) serves as cofactor.

Its subcellular location is the cytoplasm. It carries out the reaction ATP-dependent breakage, passage and rejoining of double-stranded DNA.. Functionally, a type II topoisomerase that negatively supercoils closed circular double-stranded (ds) DNA in an ATP-dependent manner to modulate DNA topology and maintain chromosomes in an underwound state. Negative supercoiling favors strand separation, and DNA replication, transcription, recombination and repair, all of which involve strand separation. Also able to catalyze the interconversion of other topological isomers of dsDNA rings, including catenanes and knotted rings. Type II topoisomerases break and join 2 DNA strands simultaneously in an ATP-dependent manner. This is DNA gyrase subunit B from Streptococcus pyogenes serotype M3 (strain ATCC BAA-595 / MGAS315).